The following is a 423-amino-acid chain: Gamma-glutamyl phosphate reductase (423 aa).

It belongs to the gamma-glutamyl phosphate reductase family.

The protein localises to the cytoplasm. It carries out the reaction L-glutamate 5-semialdehyde + phosphate + NADP(+) = L-glutamyl 5-phosphate + NADPH + H(+). Its pathway is amino-acid biosynthesis; L-proline biosynthesis; L-glutamate 5-semialdehyde from L-glutamate: step 2/2. Functionally, catalyzes the NADPH-dependent reduction of L-glutamate 5-phosphate into L-glutamate 5-semialdehyde and phosphate. The product spontaneously undergoes cyclization to form 1-pyrroline-5-carboxylate. The sequence is that of Gamma-glutamyl phosphate reductase from Burkholderia orbicola (strain MC0-3).